The following is a 382-amino-acid chain: Na(+)/H(+) antiporter NhaA 2 (382 aa).

12 helical membrane-spanning segments follow: residues 7–27 (AGGVLLIAASILALIFANSYL), 28–48 (SGFYNGVLNLPLVVAIGAFEI), 52–72 (LLLWVNDGLMALFFLMVGLEV), 88–108 (VLPGLAALAGVAFPAIIYASF), 118–138 (GWAIPSATDIAFALGVFSLFG), 147–167 (LFLLSVAIFDDIAAIVIIALF), 170–190 (HELSTLSLLVAGIGIVMLFVL), 206–226 (LVVWAAVLKSGVHATLAGFVI), 254–274 (VAYFILPFFAFVNAGVHLGGI), 285–305 (LGIIVGLFVGKQLGIFSVCWL), 325–345 (GVCLLAGIGFTMSLFIGSLAF), and 356–376 (VKLGVLFGSLLSAICGALILT).

The protein belongs to the NhaA Na(+)/H(+) (TC 2.A.33) antiporter family.

The protein resides in the cell inner membrane. It catalyses the reaction Na(+)(in) + 2 H(+)(out) = Na(+)(out) + 2 H(+)(in). In terms of biological role, na(+)/H(+) antiporter that extrudes sodium in exchange for external protons. In Saccharophagus degradans (strain 2-40 / ATCC 43961 / DSM 17024), this protein is Na(+)/H(+) antiporter NhaA 2.